The chain runs to 879 residues: Alanine--tRNA ligase (879 aa).

Residues His-566, His-570, Cys-668, and His-672 each contribute to the Zn(2+) site.

This sequence belongs to the class-II aminoacyl-tRNA synthetase family. It depends on Zn(2+) as a cofactor.

The protein resides in the cytoplasm. It catalyses the reaction tRNA(Ala) + L-alanine + ATP = L-alanyl-tRNA(Ala) + AMP + diphosphate. Its function is as follows. Catalyzes the attachment of alanine to tRNA(Ala) in a two-step reaction: alanine is first activated by ATP to form Ala-AMP and then transferred to the acceptor end of tRNA(Ala). Also edits incorrectly charged Ser-tRNA(Ala) and Gly-tRNA(Ala) via its editing domain. This is Alanine--tRNA ligase from Clostridium botulinum (strain Loch Maree / Type A3).